We begin with the raw amino-acid sequence, 408 residues long: MGLRRGPCPAALLPGGFLFLLLLADPALLAGRRPPVVLVPGDLGNQLEAKLDKPTVVHYLCSKRTESYFTLWLNLELLLPVIIDCWIDNIRLVYNRTSRATQFPDGVDVRVPGFGKTFSLEFLDPSKSSVGSYFHTMVESLVDWGYIRGEDVRGAPYDWRRAPNENGPYFLALREMIEEMYQLYGGPVVLVAHSMGNMYTLYFLQRQPQAWKNKYIQAFVALGAPWGGVAKTLRVLASGDNNRIPVIRPLKIREQQRSAVSTSWLLPYNYTWSPEKIFVHTPTANYTLRDYHQFFQDIGFKDGWLMRQDTEGLVEAMVPPGVPLHCLYGTGVPTPDSFYYESFPDRDPKICFGDGDGTVNLQSALQCQAWRGHQEHQVSLQALPGSEHIEMLANATTLAYLKRVLLGP.

The signal sequence occupies residues 1–31 (MGLRRGPCPAALLPGGFLFLLLLADPALLAG). Residue D42 coordinates substrate. C61 and C85 are joined by a disulfide. An N-linked (GlcNAc...) asparagine glycan is attached at N95. S194 serves as the catalytic Acyl-ester intermediate. A Zn(2+)-binding site is contributed by S194. M195 provides a ligand contact to substrate. 2 N-linked (GlcNAc...) asparagine glycosylation sites follow: N269 and N285. D336 and C351 together coordinate Zn(2+). Active-site charge relay system residues include D356 and H388. Position 388 (H388) interacts with Zn(2+). N-linked (GlcNAc...) asparagine glycosylation is present at N394.

Belongs to the AB hydrolase superfamily. Lipase family. Post-translationally, N-glycosylated. N-glycosylation is important for maturation of the enzyme and normal subcellular location.

It localises to the secreted. The protein localises to the lysosome. It is found in the membrane. The enzyme catalyses a 1,2-diacyl-sn-glycero-3-phosphocholine + H2O = a 2-acyl-sn-glycero-3-phosphocholine + a fatty acid + H(+). The catalysed reaction is 1-hexadecanoyl-2-(9Z-octadecenoyl)-sn-glycero-3-phosphocholine + H2O = 2-(9Z-octadecenoyl)-sn-glycero-3-phosphocholine + hexadecanoate + H(+). It catalyses the reaction 1,2-di-(9Z-octadecenoyl)-sn-glycero-3-phosphocholine + H2O = 2-(9Z-octadecenoyl)-sn-glycero-3-phosphocholine + (9Z)-octadecenoate + H(+). It carries out the reaction 1-hexadecanoyl-2-glutaroyl-sn-glycero-3-phosphocholine + H2O = 2-glutaroyl-sn-glycero-3-phosphocholine + hexadecanoate + H(+). The enzyme catalyses 1-hexadecanoyl-2-nonadioyl-sn-glycero-3-phosphocholine + H2O = 2-nonadioyl-sn-glycero-3-phosphocholine + hexadecanoate + H(+). The catalysed reaction is 1-hexadecanoyl-2-(5-oxopentanoyl)-sn-glycero-3-phosphocholine + H2O = 2-(5-oxopentanoyl)-sn-glycero-3-phosphocholine + hexadecanoate + H(+). It catalyses the reaction 1-hexadecanoyl-2-(9-oxononanoyl)-sn-glycero-3-phosphocholine + H2O = 2-(9-oxononanoyl)-sn-glycero-3-phosphocholine + hexadecanoate + H(+). It carries out the reaction 1,2-dihexadecanoyl-sn-glycero-3-phosphocholine + H2O = 2-hexadecanoyl-sn-glycero-3-phosphocholine + hexadecanoate + H(+). The enzyme catalyses a 1,2-diacyl-sn-glycero-3-phosphocholine + H2O = a 1-acyl-sn-glycero-3-phosphocholine + a fatty acid + H(+). The catalysed reaction is 1-hexadecanoyl-2-(9Z-octadecenoyl)-sn-glycero-3-phosphocholine + H2O = 1-hexadecanoyl-sn-glycero-3-phosphocholine + (9Z)-octadecenoate + H(+). It catalyses the reaction 1,2-di-(9Z-octadecenoyl)-sn-glycero-3-phosphocholine + H2O = 1-(9Z-octadecenoyl)-sn-glycero-3-phosphocholine + (9Z)-octadecenoate + H(+). It carries out the reaction 1,2-dihexadecanoyl-sn-glycero-3-phosphocholine + H2O = 1-hexadecanoyl-sn-glycero-3-phosphocholine + hexadecanoate + H(+). The enzyme catalyses a 1-acyl-sn-glycero-3-phosphocholine + H2O = sn-glycerol 3-phosphocholine + a fatty acid + H(+). The catalysed reaction is 1-hexadecanoyl-sn-glycero-3-phosphocholine + H2O = sn-glycerol 3-phosphocholine + hexadecanoate + H(+). It catalyses the reaction N-(acetyl)-sphing-4-enine + a 1,2-diacyl-sn-glycero-3-phosphoethanolamine = 1-O-acyl-N-(acetyl)-sphing-4-enine + a 2-acyl-sn-glycero-3-phosphoethanolamine. It carries out the reaction 1-hexadecanoyl-2-(9Z-octadecenoyl)-sn-glycero-3-phosphoethanolamine + N-(acetyl)-sphing-4-enine = 2-(9Z-octadecenoyl)-sn-glycero-3-phosphoethanolamine + 1-hexadecanoyl-N-(acetyl)-sphing-4-enine. The enzyme catalyses 1-hexadecanoyl-2-(9Z,12Z-octadecadienoyl)-sn-glycero-3-phosphoethanolamine + N-(acetyl)-sphing-4-enine = 2-(9Z,12Z)-octadecadienoyl-sn-glycero-3-phosphoethanolamine + 1-hexadecanoyl-N-(acetyl)-sphing-4-enine. The catalysed reaction is 1-hexadecanoyl-2-(5Z,8Z,11Z,14Z-eicosatetraenoyl)-sn-glycero-3-phosphoethanolamine + N-(acetyl)-sphing-4-enine = 2-(5Z,8Z,11Z,14Z)-eicosatetraenoyl-sn-glycero-3-phosphoethanolamine + 1-hexadecanoyl-N-(acetyl)-sphing-4-enine. It catalyses the reaction N-(acetyl)-sphing-4-enine + a 1,2-diacyl-sn-glycero-3-phosphoethanolamine = 1-O-acyl-N-(acetyl)-sphing-4-enine + a 1-acyl-sn-glycero-3-phosphoethanolamine. It carries out the reaction 1-hexadecanoyl-2-(9Z-octadecenoyl)-sn-glycero-3-phosphoethanolamine + N-(acetyl)-sphing-4-enine = 1-(9Z-octadecenoyl)-N-(acetyl)-sphing-4-enine + 1-hexadecanoyl-sn-glycero-3-phosphoethanolamine. The enzyme catalyses 1-hexadecanoyl-2-(9Z,12Z-octadecadienoyl)-sn-glycero-3-phosphoethanolamine + N-(acetyl)-sphing-4-enine = 1-(9Z,12Z-octadecadienoyl)-N-acetylsphing-4-enine + 1-hexadecanoyl-sn-glycero-3-phosphoethanolamine. The catalysed reaction is 1-hexadecanoyl-2-(5Z,8Z,11Z,14Z-eicosatetraenoyl)-sn-glycero-3-phosphoethanolamine + N-(acetyl)-sphing-4-enine = 1-(5Z,8Z,11Z,14Z)-eicosatetraenoyl-N-(acetyl)-sphing-4-enine + 1-hexadecanoyl-sn-glycero-3-phosphoethanolamine. It catalyses the reaction N-(acetyl)-sphing-4-enine + a 1,2-diacyl-sn-glycero-3-phosphocholine = 1-O-acyl-N-(acetyl)-sphing-4-enine + a 2-acyl-sn-glycero-3-phosphocholine. It carries out the reaction 1-hexadecanoyl-2-(9Z-octadecenoyl)-sn-glycero-3-phosphocholine + N-(acetyl)-sphing-4-enine = 1-hexadecanoyl-N-(acetyl)-sphing-4-enine + 2-(9Z-octadecenoyl)-sn-glycero-3-phosphocholine. The enzyme catalyses 1-hexadecanoyl-2-(9Z,12Z-octadecadienoyl)-sn-glycero-3-phosphocholine + N-(acetyl)-sphing-4-enine = 2-(9Z,12Z-octadecadienoyl)-sn-glycero-3-phosphocholine + 1-hexadecanoyl-N-(acetyl)-sphing-4-enine. The catalysed reaction is 1-hexadecanoyl-2-(5Z,8Z,11Z,14Z-eicosatetraenoyl)-sn-glycero-3-phosphocholine + N-(acetyl)-sphing-4-enine = 1-hexadecanoyl-N-(acetyl)-sphing-4-enine + 2-(5Z,8Z,11Z,14Z)-eicosatetraenoyl-sn-glycero-3-phosphocholine. It catalyses the reaction 1-hexadecanoyl-2-(4Z,7Z,10Z,13Z,16Z,19Z-docosahexaenoyl)-sn-glycero-3-phosphocholine + N-(acetyl)-sphing-4-enine = 2-(4Z,7Z,10Z,13Z,16Z,19Z-docosahexaenoyl)-sn-glycero-3-phosphocholine + 1-hexadecanoyl-N-(acetyl)-sphing-4-enine. It carries out the reaction 1-hexadecanoyl-2-nonadioyl-sn-glycero-3-phosphocholine + N-(acetyl)-sphing-4-enine = 2-nonadioyl-sn-glycero-3-phosphocholine + 1-hexadecanoyl-N-(acetyl)-sphing-4-enine. The enzyme catalyses 1-octadecanoyl-2-(9Z-octadecenoyl)-sn-glycero-3-phosphocholine + N-(acetyl)-sphing-4-enine = 1-octadecanoyl-N-(acetyl)-sphing-4-enine + 2-(9Z-octadecenoyl)-sn-glycero-3-phosphocholine. The catalysed reaction is 1-(9Z)-octadecenoyl-2-octadecanoyl-sn-glycero-3-phosphocholine + N-(acetyl)-sphing-4-enine = 2-octadecanoyl-sn-glycero-3-phosphocholine + 1-(9Z-octadecenoyl)-N-(acetyl)-sphing-4-enine. It catalyses the reaction 1-octadecanoyl-2-(5Z,8Z,11Z,14Z-eicosatetraenoyl)-sn-glycero-3-phosphocholine + N-(acetyl)-sphing-4-enine = 1-octadecanoyl-N-(acetyl)-sphing-4-enine + 2-(5Z,8Z,11Z,14Z)-eicosatetraenoyl-sn-glycero-3-phosphocholine. It carries out the reaction 1-(9Z-octadecenoyl)-2-hexadecanoyl-sn-glycero-3-phosphocholine + N-(acetyl)-sphing-4-enine = 1-(9Z-octadecenoyl)-N-(acetyl)-sphing-4-enine + 2-hexadecanoyl-sn-glycero-3-phosphocholine. The enzyme catalyses N-(acetyl)-sphing-4-enine + a 1,2-diacyl-sn-glycero-3-phosphocholine = 1-O-acyl-N-(acetyl)-sphing-4-enine + a 1-acyl-sn-glycero-3-phosphocholine. The catalysed reaction is 1-hexadecanoyl-2-(9Z-octadecenoyl)-sn-glycero-3-phosphocholine + N-(acetyl)-sphing-4-enine = 1-(9Z-octadecenoyl)-N-(acetyl)-sphing-4-enine + 1-hexadecanoyl-sn-glycero-3-phosphocholine. It catalyses the reaction 1-hexadecanoyl-2-(9Z,12Z-octadecadienoyl)-sn-glycero-3-phosphocholine + N-(acetyl)-sphing-4-enine = 1-(9Z,12Z-octadecadienoyl)-N-acetylsphing-4-enine + 1-hexadecanoyl-sn-glycero-3-phosphocholine. It carries out the reaction 1-hexadecanoyl-2-(5Z,8Z,11Z,14Z-eicosatetraenoyl)-sn-glycero-3-phosphocholine + N-(acetyl)-sphing-4-enine = 1-(5Z,8Z,11Z,14Z)-eicosatetraenoyl-N-(acetyl)-sphing-4-enine + 1-hexadecanoyl-sn-glycero-3-phosphocholine. The enzyme catalyses 1-hexadecanoyl-2-(4Z,7Z,10Z,13Z,16Z,19Z-docosahexaenoyl)-sn-glycero-3-phosphocholine + N-(acetyl)-sphing-4-enine = 1-(4Z,7Z,10Z,13Z,16Z,19Z-docosahexaenoyl)-N-(acetyl)-sphing-4-enine + 1-hexadecanoyl-sn-glycero-3-phosphocholine. The catalysed reaction is 1-octadecanoyl-2-(9Z-octadecenoyl)-sn-glycero-3-phosphocholine + N-(acetyl)-sphing-4-enine = 1-(9Z-octadecenoyl)-N-(acetyl)-sphing-4-enine + 1-octadecanoyl-sn-glycero-3-phosphocholine. It catalyses the reaction 1-octadecanoyl-2-(9Z,12Z)-octadecadienoyl-sn-glycero-3-phosphocholine + N-(acetyl)-sphing-4-enine = 1-(9Z,12Z-octadecadienoyl)-N-acetylsphing-4-enine + 1-octadecanoyl-sn-glycero-3-phosphocholine. It carries out the reaction 1-(9Z-octadecenoyl)-2-hexadecanoyl-sn-glycero-3-phosphocholine + N-(acetyl)-sphing-4-enine = 1-hexadecanoyl-N-(acetyl)-sphing-4-enine + 1-(9Z-octadecenoyl)-sn-glycero-3-phosphocholine. The enzyme catalyses 1-(9Z)-octadecenoyl-2-octadecanoyl-sn-glycero-3-phosphocholine + N-(acetyl)-sphing-4-enine = 1-octadecanoyl-N-(acetyl)-sphing-4-enine + 1-(9Z-octadecenoyl)-sn-glycero-3-phosphocholine. The catalysed reaction is 1,2-di-(9Z-octadecenoyl)-sn-glycero-3-phosphocholine + N-(acetyl)-sphing-4-enine = 1-(9Z-octadecenoyl)-N-(acetyl)-sphing-4-enine + 1-(9Z-octadecenoyl)-sn-glycero-3-phosphocholine. It catalyses the reaction 1-octadecanoyl-2-(5Z,8Z,11Z,14Z-eicosatetraenoyl)-sn-glycero-3-phosphocholine + N-(acetyl)-sphing-4-enine = 1-(5Z,8Z,11Z,14Z)-eicosatetraenoyl-N-(acetyl)-sphing-4-enine + 1-octadecanoyl-sn-glycero-3-phosphocholine. It carries out the reaction a 1,2-diacyl-sn-glycero-3-phospho-L-serine + N-(acetyl)-sphing-4-enine = a 2-acyl-sn-glycero-3-phospho-L-serine + 1-O-acyl-N-(acetyl)-sphing-4-enine. The enzyme catalyses 1-octadecanoyl-2-(9Z-octadecenoyl)-sn-glycero-3-phospho-L-serine + N-(acetyl)-sphing-4-enine = 2-(9Z-octadecenoyl)-sn-glycero-3-phospho-L-serine + 1-octadecanoyl-N-(acetyl)-sphing-4-enine. The catalysed reaction is a 1,2-diacyl-sn-glycero-3-phospho-L-serine + N-(acetyl)-sphing-4-enine = 1-O-acyl-N-(acetyl)-sphing-4-enine + a 1-acyl-sn-glycero-3-phospho-L-serine. It catalyses the reaction 1-octadecanoyl-2-(9Z-octadecenoyl)-sn-glycero-3-phospho-L-serine + N-(acetyl)-sphing-4-enine = 1-octadecanoyl-sn-glycero-3-phosphoserine + 1-(9Z-octadecenoyl)-N-(acetyl)-sphing-4-enine. It carries out the reaction a 1,2-diacyl-sn-glycero-3-phospho-(1'-sn-glycerol) + N-(acetyl)-sphing-4-enine = 2-acyl-sn-glycero-3-phospho-(1'-sn-glycerol) + 1-O-acyl-N-(acetyl)-sphing-4-enine. The enzyme catalyses 1-octadecanoyl-2-(9Z-octadecenoyl)-sn-glycero-3-phospho-(1'-sn-glycerol) + N-(acetyl)-sphing-4-enine = 2-(9Z-octadecenoyl)-sn-glycero-3-phospho-(1'-sn-glycerol) + 1-octadecanoyl-N-(acetyl)-sphing-4-enine. The catalysed reaction is a 1,2-diacyl-sn-glycero-3-phospho-(1'-sn-glycerol) + N-(acetyl)-sphing-4-enine = 1-O-acyl-N-(acetyl)-sphing-4-enine + 1-acyl-sn-glycero-3-phospho-(1'-sn-glycerol). It catalyses the reaction 1-octadecanoyl-2-(9Z-octadecenoyl)-sn-glycero-3-phospho-(1'-sn-glycerol) + N-(acetyl)-sphing-4-enine = 1-octadecanoyl-sn-glycero-3-phospho-(1'-sn-glycerol) + 1-(9Z-octadecenoyl)-N-(acetyl)-sphing-4-enine. It carries out the reaction an N-acylethanolamine + a 1,2-diacyl-sn-glycero-3-phosphocholine = 2-(acylamino)ethyl fatty acid + a 2-acyl-sn-glycero-3-phosphocholine. The enzyme catalyses an N-acylethanolamine + a 1,2-diacyl-sn-glycero-3-phosphocholine = 2-(acylamino)ethyl fatty acid + a 1-acyl-sn-glycero-3-phosphocholine. The catalysed reaction is N-(5Z,8Z,11Z,14Z-eicosatetraenoyl)-ethanolamine + 1,2-di-(9Z-octadecenoyl)-sn-glycero-3-phosphocholine = 2-[(5Z,8Z,11Z,14Z)-eicosatetraenoylamino]ethyl (9Z)-octadecenoate + (9Z-octadecenoyl)-sn-glycero-3-phosphocholine. It catalyses the reaction N-(9Z-octadecenoyl) ethanolamine + 1,2-di-(9Z-octadecenoyl)-sn-glycero-3-phosphocholine = 2-[(9Z)-octadecenoylamino]ethyl (9Z)-octadecenoate + (9Z-octadecenoyl)-sn-glycero-3-phosphocholine. It carries out the reaction a 3-acyl-sn-glycerol + a 1,2-diacyl-sn-glycero-3-phosphocholine = a 1,3-diacylglycerol + a 1-acyl-sn-glycero-3-phosphocholine. The enzyme catalyses a 3-acyl-sn-glycerol + a 1,2-diacyl-sn-glycero-3-phosphocholine = a 1,3-diacylglycerol + a 2-acyl-sn-glycero-3-phosphocholine. The catalysed reaction is 3-(9Z-octadecenoyl)-sn-glycerol + 1,2-di-(9Z-octadecenoyl)-sn-glycero-3-phosphocholine = 1,3-di-(9Z-octadecenoyl)-glycerol + (9Z-octadecenoyl)-sn-glycero-3-phosphocholine. It catalyses the reaction 3-hexadecanoyl-sn-glycerol + 1,2-di-(9Z-octadecenoyl)-sn-glycero-3-phosphocholine = 1-(9Z)-octadecenoyl-3-hexadecanoyl-sn-glycerol + (9Z-octadecenoyl)-sn-glycero-3-phosphocholine. It carries out the reaction a 1-acyl-sn-glycerol + a 1,2-diacyl-sn-glycero-3-phosphocholine = a 1,3-diacylglycerol + a 2-acyl-sn-glycero-3-phosphocholine. The enzyme catalyses a 1-acyl-sn-glycerol + a 1,2-diacyl-sn-glycero-3-phosphocholine = a 1,3-diacylglycerol + a 1-acyl-sn-glycero-3-phosphocholine. The catalysed reaction is 1-(9Z-octadecenoyl)-sn-glycerol + 1,2-di-(9Z-octadecenoyl)-sn-glycero-3-phosphocholine = 1,3-di-(9Z-octadecenoyl)-glycerol + (9Z-octadecenoyl)-sn-glycero-3-phosphocholine. It catalyses the reaction 1-hexadecanoyl-sn-glycerol + 1,2-di-(9Z-octadecenoyl)-sn-glycero-3-phosphocholine = 1-hexadecanoyl-3-(9Z)-octadecenoyl-sn-glycerol + (9Z-octadecenoyl)-sn-glycero-3-phosphocholine. It carries out the reaction a 2-acylglycerol + a 1,2-diacyl-sn-glycero-3-phosphocholine = a 1,2-diacylglycerol + a 2-acyl-sn-glycero-3-phosphocholine. The enzyme catalyses a 2-acylglycerol + a 1,2-diacyl-sn-glycero-3-phosphocholine = a 1,2-diacylglycerol + a 1-acyl-sn-glycero-3-phosphocholine. The catalysed reaction is 2-hexadecanoylglycerol + 1,2-di-(9Z-octadecenoyl)-sn-glycero-3-phosphocholine = 1-(9Z)-octadecenoyl-2-hexadecanoylglycerol + (9Z-octadecenoyl)-sn-glycero-3-phosphocholine. It catalyses the reaction 1-O-alkylglycerol + a 1,2-diacyl-sn-glycero-3-phosphocholine = 1-O-alkyl-3-acylglycerol + a 1-acyl-sn-glycero-3-phosphocholine. It carries out the reaction 1-O-alkylglycerol + a 1,2-diacyl-sn-glycero-3-phosphocholine = 1-O-alkyl-3-acylglycerol + a 2-acyl-sn-glycero-3-phosphocholine. The enzyme catalyses 1-O-hexadecylglycerol + 1,2-di-(9Z-octadecenoyl)-sn-glycero-3-phosphocholine = 1-O-hexadecyl-3-(9Z)-octadecenoylglycerol + (9Z-octadecenoyl)-sn-glycero-3-phosphocholine. The catalysed reaction is 1-O-alkyl-2-acyl-sn-glycerol + a 1,2-diacyl-sn-glycero-3-phosphocholine = 1-O-alkyl-2,3-diacyl-sn-glycerol + a 2-acyl-sn-glycero-3-phosphocholine. It catalyses the reaction 1-O-alkyl-2-acyl-sn-glycerol + a 1,2-diacyl-sn-glycero-3-phosphocholine = 1-O-alkyl-2,3-diacyl-sn-glycerol + a 1-acyl-sn-glycero-3-phosphocholine. It carries out the reaction 1-O-hexadecyl-2-acetyl-sn-glycerol + 1,2-di-(9Z-octadecenoyl)-sn-glycero-3-phosphocholine = 1-O-hexadecyl-2-acetyl-3-(9Z)-octadecenoyl-sn-glycerol + (9Z-octadecenoyl)-sn-glycero-3-phosphocholine. The enzyme catalyses 1-O-hexadecyl-2-O-methyl-sn-glycerol + 1,2-di-(9Z-octadecenoyl)-sn-glycero-3-phosphocholine = 1-O-hexadecyl-2-O-methyl-3-(9Z)-octadecenoyl-sn-glycerol + (9Z-octadecenoyl)-sn-glycero-3-phosphocholine. The catalysed reaction is a 1,2-diacyl-sn-glycero-3-phosphoethanolamine + H2O = a 1-acyl-sn-glycero-3-phosphoethanolamine + a fatty acid + H(+). It catalyses the reaction 1-acyl-2-(5Z,8Z,11Z,14Z)-eicosatetraenoyl-sn-glycero-3-phosphoethanolamine + H2O = a 1-acyl-sn-glycero-3-phosphoethanolamine + (5Z,8Z,11Z,14Z)-eicosatetraenoate + H(+). It carries out the reaction a 1,2-diacyl-sn-glycero-3-phospho-(1'-sn-glycerol) + H2O = 1-acyl-sn-glycero-3-phospho-(1'-sn-glycerol) + a fatty acid + H(+). The enzyme catalyses 1-hexadecanoyl-2-(9Z-octadecenoyl)-sn-glycero-3-phospho-(1'-sn-glycerol) + H2O = 1-hexadecanoyl-sn-glycero-3-phospho-(1'-sn-glycerol) + (9Z)-octadecenoate + H(+). The catalysed reaction is a 1,2-diacyl-sn-glycero-3-phospho-(1'-sn-glycerol) + H2O = 2-acyl-sn-glycero-3-phospho-(1'-sn-glycerol) + a fatty acid + H(+). It catalyses the reaction 1-hexadecanoyl-2-(9Z-octadecenoyl)-sn-glycero-3-phospho-(1'-sn-glycerol) + H2O = 2-(9Z-octadecenoyl)-sn-glycero-3-phospho-(1'-sn-glycerol) + hexadecanoate + H(+). Has dual calcium-independent phospholipase and O-acyltransferase activities with a potential role in glycerophospholipid homeostasis and remodeling of acyl groups of lipophilic alcohols present in acidic cellular compartments. Catalyzes hydrolysis of the ester bond of the fatty acyl group attached at sn-1 or sn-2 position of phospholipids (phospholipase A1 or A2 activity) and transfer it to the hydroxyl group at the first carbon of lipophilic alcohols (O-acyltransferase activity). Among preferred fatty acyl donors are phosphatidylcholines, phosphatidylethanolamines, phosphatidylglycerols and phosphatidylserines. Favors sn-2 over sn-1 deacylation of unsaturated fatty acyl groups of phosphatidylcholines, phosphatidylethanolamines, and phosphatidylglycerols. Among preferred fatty acyl acceptors are natural lipophilic alcohols including short-chain ceramide N-acetyl-sphingosine (C2 ceramide), alkylacylglycerols, monoacylglycerols, and acylethanolamides such as anandamide and oleoylethanolamide. Selectively hydrolyzes the sn-1 fatty acyl group of truncated oxidized phospholipids and may play a role in detoxification of reactive oxidized phospholipids during oxidative stress. Required for normal phospholipid degradation in alveolar macrophages with potential implications in the clearance of pulmonary surfactant, which is mainly composed of dipalmitoylphosphatidylcholine (1,2-dihexadecanoyl-sn-glycero-3-phosphocholine). Involved in the first step of bis(monoacylglycero)phosphate (BMP) de novo synthesis from phosphatidylglycerol (1,2-diacyl-sn-glycero-3-phospho-(1'-sn-glycerol), PG). BMP is an important player in cargo sorting and degradation, regulation of cellular cholesterol levels and intercellular communication. At neutral pH, hydrolyzes the sn-1 fatty acyl group of the lysophosphatidylcholines. The sequence is that of Lysosomal phospholipase A and acyltransferase (PLA2G15) from Canis lupus familiaris (Dog).